We begin with the raw amino-acid sequence, 381 residues long: Neutral protease 2 homolog mep20 (381 aa).

Residues Met-1 to Ala-19 form the signal peptide. Residues Leu-20 to Arg-193 constitute a propeptide that is removed on maturation. 2 disulfides stabilise this stretch: Cys-199-Cys-271 and Cys-278-Cys-296. His-321 lines the Zn(2+) pocket. Glu-322 is an active-site residue. Zn(2+) contacts are provided by His-325 and Asp-336.

This sequence belongs to the peptidase M35 family. Zn(2+) serves as cofactor.

The enzyme catalyses Preferential cleavage of bonds with hydrophobic residues in P1'. Also 3-Asn-|-Gln-4 and 8-Gly-|-Ser-9 bonds in insulin B chain.. Functionally, secreted metalloproteinase that allows assimilation of proteinaceous substrates. Shows high activities on basic nuclear substrates such as histone and protamine. This chain is Neutral protease 2 homolog mep20 (mep20), found in Aspergillus flavus.